Consider the following 252-residue polypeptide: UPF0246 protein FP0718 (252 aa).

This sequence belongs to the UPF0246 family.

The protein is UPF0246 protein FP0718 of Flavobacterium psychrophilum (strain ATCC 49511 / DSM 21280 / CIP 103535 / JIP02/86).